The sequence spans 569 residues: Ribonuclease J (569 aa).

Residues His81, His83, Asp85, His86, His150, and Asp172 each coordinate Zn(2+). 373-377 (HASGH) contributes to the substrate binding site. Position 399 (His399) interacts with Zn(2+).

This sequence belongs to the metallo-beta-lactamase superfamily. RNA-metabolizing metallo-beta-lactamase-like family. Bacterial RNase J subfamily. In terms of assembly, homodimer, may be a subunit of the RNA degradosome. Requires Zn(2+) as cofactor.

It localises to the cytoplasm. In terms of biological role, an RNase that has 5'-3' exonuclease and possibly endoonuclease activity. Involved in maturation of rRNA and in some organisms also mRNA maturation and/or decay. The polypeptide is Ribonuclease J (Mycoplasma genitalium (strain ATCC 33530 / DSM 19775 / NCTC 10195 / G37) (Mycoplasmoides genitalium)).